The chain runs to 59 residues: Large ribosomal subunit protein bL32 (59 aa).

Residues 1–19 (MAQPKKKTSKSRRNMRRSH) show a composition bias toward basic residues. The segment at 1–20 (MAQPKKKTSKSRRNMRRSHD) is disordered.

Belongs to the bacterial ribosomal protein bL32 family.

This Maridesulfovibrio salexigens (strain ATCC 14822 / DSM 2638 / NCIMB 8403 / VKM B-1763) (Desulfovibrio salexigens) protein is Large ribosomal subunit protein bL32.